Consider the following 72-residue polypeptide: MAKDDVIEVEGTVLETLPNAMFKVELENGHVVLAHVSGKIRMNFIRILPGDKVTVELSPYDLNRGRITYRFK.

Residues 1-72 (MAKDDVIEVE…NRGRITYRFK (72 aa)) form the S1-like domain. Residue tyrosine 60 is modified to Phosphotyrosine.

Belongs to the IF-1 family. Component of the 30S ribosomal translation pre-initiation complex which assembles on the 30S ribosome in the order IF-2 and IF-3, IF-1 and N-formylmethionyl-tRNA(fMet); mRNA recruitment can occur at any time during PIC assembly.

The protein localises to the cytoplasm. One of the essential components for the initiation of protein synthesis. Stabilizes the binding of IF-2 and IF-3 on the 30S subunit to which N-formylmethionyl-tRNA(fMet) subsequently binds. Helps modulate mRNA selection, yielding the 30S pre-initiation complex (PIC). Upon addition of the 50S ribosomal subunit IF-1, IF-2 and IF-3 are released leaving the mature 70S translation initiation complex. The polypeptide is Translation initiation factor IF-1 (Bacillus thuringiensis (strain Al Hakam)).